Reading from the N-terminus, the 103-residue chain is Pyrimidine/purine nucleoside phosphorylase (103 aa).

Belongs to the nucleoside phosphorylase PpnP family.

The catalysed reaction is a purine D-ribonucleoside + phosphate = a purine nucleobase + alpha-D-ribose 1-phosphate. The enzyme catalyses adenosine + phosphate = alpha-D-ribose 1-phosphate + adenine. It carries out the reaction cytidine + phosphate = cytosine + alpha-D-ribose 1-phosphate. It catalyses the reaction guanosine + phosphate = alpha-D-ribose 1-phosphate + guanine. The catalysed reaction is inosine + phosphate = alpha-D-ribose 1-phosphate + hypoxanthine. The enzyme catalyses thymidine + phosphate = 2-deoxy-alpha-D-ribose 1-phosphate + thymine. It carries out the reaction uridine + phosphate = alpha-D-ribose 1-phosphate + uracil. It catalyses the reaction xanthosine + phosphate = alpha-D-ribose 1-phosphate + xanthine. Its function is as follows. Catalyzes the phosphorolysis of diverse nucleosides, yielding D-ribose 1-phosphate and the respective free bases. Can use uridine, adenosine, guanosine, cytidine, thymidine, inosine and xanthosine as substrates. Also catalyzes the reverse reactions. This Methylobacillus flagellatus (strain ATCC 51484 / DSM 6875 / VKM B-1610 / KT) protein is Pyrimidine/purine nucleoside phosphorylase.